The sequence spans 267 residues: Pyridoxine/pyridoxamine 5'-phosphate oxidase (267 aa).

Residues 20–23 (RQGY) and lysine 80 each bind substrate. Residues 75-80 (RTVLLK), 90-91 (YT), arginine 96, lysine 97, and glutamine 119 each bind FMN. Substrate is bound by residues tyrosine 137, arginine 141, and serine 145. FMN contacts are provided by residues 154-155 (QS) and tryptophan 200. Position 206–208 (206–208 (RLH)) interacts with substrate. Arginine 210 is an FMN binding site.

It belongs to the pyridoxamine 5'-phosphate oxidase family. In terms of assembly, homodimer. The cofactor is FMN.

The catalysed reaction is pyridoxamine 5'-phosphate + O2 + H2O = pyridoxal 5'-phosphate + H2O2 + NH4(+). The enzyme catalyses pyridoxine 5'-phosphate + O2 = pyridoxal 5'-phosphate + H2O2. The protein operates within cofactor metabolism; pyridoxal 5'-phosphate salvage; pyridoxal 5'-phosphate from pyridoxamine 5'-phosphate: step 1/1. Its pathway is cofactor metabolism; pyridoxal 5'-phosphate salvage; pyridoxal 5'-phosphate from pyridoxine 5'-phosphate: step 1/1. Its function is as follows. Catalyzes the oxidation of either pyridoxine 5'-phosphate (PNP) or pyridoxamine 5'-phosphate (PMP) into pyridoxal 5'-phosphate (PLP). The sequence is that of Pyridoxine/pyridoxamine 5'-phosphate oxidase from Frankia casuarinae (strain DSM 45818 / CECT 9043 / HFP020203 / CcI3).